Reading from the N-terminus, the 323-residue chain is Zinc finger C2HC domain-containing protein 1A (323 aa).

Residues E14–K43 form a C2HC/C3H-type 1 zinc finger. Zn(2+) contacts are provided by C18, C21, H33, and C37. The interval T42–R81 is disordered. The segment covering T47 to G57 has biased composition (basic and acidic residues). A C2HC/C3H-type 2 zinc finger spans residues D117–R146. Positions 121, 124, 136, and 140 each coordinate Zn(2+). The segment at N149–K258 is disordered. Positions S177 to T197 are enriched in polar residues. Positions V198–G214 are enriched in low complexity. Residue S221 is modified to Phosphoserine. T242 is subject to Phosphothreonine. Phosphoserine is present on S290.

The protein belongs to the ZC2HC1 family. The cofactor is Zn(2+).

The sequence is that of Zinc finger C2HC domain-containing protein 1A (ZC2HC1A) from Bos taurus (Bovine).